The following is a 441-amino-acid chain: Glutamyl-tRNA reductase (441 aa).

Substrate contacts are provided by residues 49 to 52 (TCNR), Ser110, 115 to 117 (EPQ), and Gln121. Cys50 functions as the Nucleophile in the catalytic mechanism. 190–195 (GAGEMA) contributes to the NADP(+) binding site.

This sequence belongs to the glutamyl-tRNA reductase family. As to quaternary structure, homodimer.

The enzyme catalyses (S)-4-amino-5-oxopentanoate + tRNA(Glu) + NADP(+) = L-glutamyl-tRNA(Glu) + NADPH + H(+). Its pathway is porphyrin-containing compound metabolism; protoporphyrin-IX biosynthesis; 5-aminolevulinate from L-glutamyl-tRNA(Glu): step 1/2. Its function is as follows. Catalyzes the NADPH-dependent reduction of glutamyl-tRNA(Glu) to glutamate 1-semialdehyde (GSA). The sequence is that of Glutamyl-tRNA reductase from Sulfurihydrogenibium sp. (strain YO3AOP1).